Here is a 953-residue protein sequence, read N- to C-terminus: Kinesin-like protein KIF23 (953 aa).

Residues 7-11 (KTVRK) carry the Nuclear localization signal motif. The Kinesin motor domain maps to 25–436 (PVGVYCRVRP…MRFAEVTQEV (412 aa)). An ATP-binding site is contributed by 112 to 119 (GVTGSGKT). Residues serine 155 and serine 160 each carry the phosphoserine modification. The stretch at 542 to 618 (QEKLNEREKV…RRLEARLQGM (77 aa)) forms a coiled coil. Glycyl lysine isopeptide (Lys-Gly) (interchain with G-Cter in SUMO2) cross-links involve residues lysine 572 and lysine 587. A Phosphoserine modification is found at serine 606. Glycyl lysine isopeptide (Lys-Gly) (interchain with G-Cter in SUMO2) cross-links involve residues lysine 625, lysine 648, lysine 663, and lysine 666. Residues 658-695 (IVTEPKPEKPERPSRERDREKIIPRSVSPSPLPLSSNN) are disordered. Residues 662-680 (PKPEKPERPSRERDREKII) are compositionally biased toward basic and acidic residues. A compositionally biased stretch (low complexity) spans 681–693 (PRSVSPSPLPLSS). A phosphoserine mark is found at serine 683 and serine 685. Phosphothreonine is present on threonine 739. Serine 807 carries the phosphoserine modification. Residues lysine 816 and lysine 847 each participate in a glycyl lysine isopeptide (Lys-Gly) (interchain with G-Cter in SUMO2) cross-link. Serine 860 is subject to Phosphoserine. Residues lysine 867, lysine 870, and lysine 892 each participate in a glycyl lysine isopeptide (Lys-Gly) (interchain with G-Cter in SUMO2) cross-link. Disordered regions lie at residues 894–921 (ELPT…EWTD) and 934–953 (AGSQ…RKKP). A Phosphoserine modification is found at serine 904. Threonine 920 is modified (phosphothreonine). A Glycyl lysine isopeptide (Lys-Gly) (interchain with G-Cter in SUMO2) cross-link involves residue lysine 949.

Belongs to the TRAFAC class myosin-kinesin ATPase superfamily. Kinesin family. Heterotetramer of two molecules each of RACGAP1 and KIF23. Found in the centralspindlin complex. Interacts with RACGAP1; the interaction is direct. Interacts with ECT2 and PRC1. Interacts with ANXA11 during cytokinesis. Interacts with BIRC6/bruce and USP8/UBPY. Interacts with ARF6, forming heterodimers and heterotetramers. Ubiquitinated. Deubiquitinated by USP8/UBPY. As to expression, detected in testis and ovary from newborn mice (at protein level). Detected in brain, spinal cord and small intestine.

It localises to the nucleus. The protein localises to the cytoplasm. Its subcellular location is the cytoskeleton. The protein resides in the spindle. It is found in the midbody. It localises to the midbody ring. In terms of biological role, component of the centralspindlin complex that serves as a microtubule-dependent and Rho-mediated signaling required for the myosin contractile ring formation during the cell cycle cytokinesis. Essential for cytokinesis in Rho-mediated signaling. Required for the localization of ECT2 to the central spindle. Plus-end-directed motor enzyme that moves antiparallel microtubules in vitro. This is Kinesin-like protein KIF23 (Kif23) from Mus musculus (Mouse).